The primary structure comprises 143 residues: Mediator of RNA polymerase II transcription subunit 9 (143 aa).

A coiled-coil region spans residues 84 to 141; that stretch reads QDCNHKIFELQKRFESAREQIRQLPGIDYNKDEQLQRLELLRNQFKLKQQLIRKYKDT.

Belongs to the Mediator complex subunit 9 family. Component of the Mediator complex.

Its subcellular location is the nucleus. Its function is as follows. Component of the Mediator complex, a coactivator involved in the regulated transcription of nearly all RNA polymerase II-dependent genes. Mediator functions as a bridge to convey information from gene-specific regulatory proteins to the basal RNA polymerase II transcription machinery. Mediator is recruited to promoters by direct interactions with regulatory proteins and serves as a scaffold for the assembly of a functional preinitiation complex with RNA polymerase II and the general transcription factors. The sequence is that of Mediator of RNA polymerase II transcription subunit 9 (MED9) from Drosophila pseudoobscura pseudoobscura (Fruit fly).